The sequence spans 296 residues: DNA primase small subunit PriS (296 aa).

Catalysis depends on residues Asp-82, Asp-84, and Asp-191.

Belongs to the eukaryotic-type primase small subunit family. In terms of assembly, heterodimer of a small subunit (PriS) and a large subunit (PriL). Requires Mg(2+) as cofactor. It depends on Mn(2+) as a cofactor.

Functionally, catalytic subunit of DNA primase, an RNA polymerase that catalyzes the synthesis of short RNA molecules used as primers for DNA polymerase during DNA replication. The small subunit contains the primase catalytic core and has DNA synthesis activity on its own. Binding to the large subunit stabilizes and modulates the activity, increasing the rate of DNA synthesis while decreasing the length of the DNA fragments, and conferring RNA synthesis capability. The DNA polymerase activity may enable DNA primase to also catalyze primer extension after primer synthesis. May also play a role in DNA repair. The protein is DNA primase small subunit PriS of Methanopyrus kandleri (strain AV19 / DSM 6324 / JCM 9639 / NBRC 100938).